Reading from the N-terminus, the 172-residue chain is LOB domain-containing protein 4 (172 aa).

Residues 12–113 (SPCAACKLLR…AQLALAQAEV (102 aa)) form the LOB domain. The disordered stretch occupies residues 125-152 (PGHGLCPDSPSSSGSPSSKQVSPQDNKG). The span at 131–147 (PDSPSSSGSPSSKQVSP) shows a compositional bias: low complexity.

This sequence belongs to the LOB domain-containing protein family. In terms of tissue distribution, expressed in young shoots, roots, stems, leaves and flowers.

The sequence is that of LOB domain-containing protein 4 (LBD4) from Arabidopsis thaliana (Mouse-ear cress).